The primary structure comprises 434 residues: MATLEELDAQTLPGDDELDQEILNLSTQELQTRAKLLDNEIRIFRSELQRLSHENNVMLEKIKDNKEKIKNNRQLPYLVANVVEVMDMNEIEDKENSESTTQGGNVNLDNTAVGKAAVVKTSSRQTVFLPMVGLVDPDKLKPNDLVGVNKDSYLILDTLPSEFDSRVKAMEVDEKPTETYSDVGGLDKQIEELVEAIVLPMKRADKFKDMGIRAPKGALMYGPPGTGKTLLARACAAQTNATFLKLAAPQLVQMYIGEGAKLVRDAFALAKEKAPTIIFIDELDAIGTKRFDSEKSGDREVQRTMLELLNQLDGFSSDDRVKVLAATNRVDVLDPALLRSGRLDRKIEFPLPSEDSRAQILQIHSRKMTTDDDINWQELARSTDEFNGAQLKAVTVEAGMIALRNGQSSVKHEDFVEGISEVQARKSKSVSFYA.

At A2 the chain carries N-acetylalanine. At Y180 the chain carries Phosphotyrosine. 222 to 229 (GPPGTGKT) lines the ATP pocket.

The protein belongs to the AAA ATPase family. N-acetylated by NAT1.

The protein localises to the cytoplasm. Its subcellular location is the nucleus. Functionally, the 26S proteasome is involved in the ATP-dependent degradation of ubiquitinated proteins. The regulatory (or ATPase) complex confers ATP dependency and substrate specificity to the 26S complex. The chain is 26S proteasome regulatory subunit 6A (RPT5) from Saccharomyces cerevisiae (strain ATCC 204508 / S288c) (Baker's yeast).